The chain runs to 176 residues: Nucleoside triphosphate/diphosphate phosphatase (176 aa).

The active-site Proton donor is the arginine 23. Residues asparagine 87, aspartate 103, aspartate 105, aspartate 107, aspartate 120, and glutamate 123 each coordinate Mg(2+).

It belongs to the Ntdp family. The cofactor is Mg(2+).

It catalyses the reaction a ribonucleoside 5'-triphosphate + H2O = a ribonucleoside 5'-diphosphate + phosphate + H(+). The enzyme catalyses a ribonucleoside 5'-diphosphate + H2O = a ribonucleoside 5'-phosphate + phosphate + H(+). Functionally, has nucleoside phosphatase activity towards nucleoside triphosphates and nucleoside diphosphates. This chain is Nucleoside triphosphate/diphosphate phosphatase, found in Bacillus cereus (strain AH820).